An 88-amino-acid polypeptide reads, in one-letter code: Protein MATERNALLY EXPRESSED GENE 2 (88 aa).

The first 27 residues, 1-27 (MEYRKRVDALVFFSLLLLGYFAAHAHG), serve as a signal peptide directing secretion. Cys65 and Cys87 form a disulfide bridge.

Belongs to the MEG family. As to expression, expressed exclusively in endosperm.

This is Protein MATERNALLY EXPRESSED GENE 2 (MEG2) from Zea mays (Maize).